A 245-amino-acid polypeptide reads, in one-letter code: Zinc finger protein 575 (245 aa).

The interval M1–D67 is disordered. Positions P36 to S49 are enriched in low complexity. Positions R52 to H63 are enriched in basic residues. 6 consecutive C2H2-type zinc fingers follow at residues H63–H85, H91–H113, H119–H141, Y147–H169, Y177–H199, and H213–H240.

This sequence belongs to the krueppel C2H2-type zinc-finger protein family.

It localises to the nucleus. Its function is as follows. May be involved in transcriptional regulation. The sequence is that of Zinc finger protein 575 (ZNF575) from Homo sapiens (Human).